Here is a 142-residue protein sequence, read N- to C-terminus: Hemoglobin larval subunit alpha (142 aa).

The Globin domain maps to 2-142 (VLSAEEKALV…VSAVLTSKYR (141 aa)). His59 contributes to the O2 binding site. Position 88 (His88) interacts with heme b.

The protein belongs to the globin family. In terms of assembly, heterotetramer of two alpha chains and two beta chains. In terms of tissue distribution, red blood cells.

Functionally, involved in oxygen transport from the lung to the various peripheral tissues. This Pleurodeles waltl (Iberian ribbed newt) protein is Hemoglobin larval subunit alpha.